The primary structure comprises 409 residues: Testis-expressed protein 13A (409 aa).

Positions 92-408 (WLHGFAKLHK…CGKGIWLQKP (317 aa)) are required for repression of transcription. Positions 347–374 (GGPHRIDHQEHPRDRRYSEPHQQRPPVY) are disordered. Over residues 348-368 (GPHRIDHQEHPRDRRYSEPHQ) the composition is skewed to basic and acidic residues. The RanBP2-type zinc-finger motif lies at 376-400 (RPGDWDCPWCNAVNFSRRDTCFDCG). Positions 382, 385, 396, and 399 each coordinate Zn(2+).

The protein belongs to the TEX13 family. In terms of assembly, interacts with CNOT1; the interaction may inhibit CNOT1 binding to mRNA and subsequently CNOT1-mediated mRNA degradation. In terms of tissue distribution, testis specific.

Functionally, binds to ssRNA containing the consensus sequence 5'-AGGUAA-3'. Plays a role in transcriptional repression. Required for rapid sperm motility and timely degradation of mRNA via its interaction with CNOT1. In Homo sapiens (Human), this protein is Testis-expressed protein 13A.